The following is a 422-amino-acid chain: Serine hydroxymethyltransferase (422 aa).

(6S)-5,6,7,8-tetrahydrofolate-binding positions include leucine 119 and 123 to 125; that span reads GHL. Lysine 228 is subject to N6-(pyridoxal phosphate)lysine. Residues glutamate 244 and 352 to 354 each bind (6S)-5,6,7,8-tetrahydrofolate; that span reads SPF.

The protein belongs to the SHMT family. Homodimer. Requires pyridoxal 5'-phosphate as cofactor.

The protein localises to the cytoplasm. It carries out the reaction (6R)-5,10-methylene-5,6,7,8-tetrahydrofolate + glycine + H2O = (6S)-5,6,7,8-tetrahydrofolate + L-serine. The protein operates within one-carbon metabolism; tetrahydrofolate interconversion. It participates in amino-acid biosynthesis; glycine biosynthesis; glycine from L-serine: step 1/1. Its function is as follows. Catalyzes the reversible interconversion of serine and glycine with tetrahydrofolate (THF) serving as the one-carbon carrier. This reaction serves as the major source of one-carbon groups required for the biosynthesis of purines, thymidylate, methionine, and other important biomolecules. Also exhibits THF-independent aldolase activity toward beta-hydroxyamino acids, producing glycine and aldehydes, via a retro-aldol mechanism. The protein is Serine hydroxymethyltransferase of Magnetococcus marinus (strain ATCC BAA-1437 / JCM 17883 / MC-1).